Reading from the N-terminus, the 680-residue chain is UvrABC system protein C (680 aa).

The GIY-YIG domain occupies 66-144 (NSPGVYRMFN…IKRLRPRFNV (79 aa)). The UVR domain maps to 254–289 (QKVKSHMAEAMNQAAEDLDFERAAIYRDRLAALSHV).

The protein belongs to the UvrC family. In terms of assembly, interacts with UvrB in an incision complex.

Its subcellular location is the cytoplasm. The UvrABC repair system catalyzes the recognition and processing of DNA lesions. UvrC both incises the 5' and 3' sides of the lesion. The N-terminal half is responsible for the 3' incision and the C-terminal half is responsible for the 5' incision. This chain is UvrABC system protein C, found in Rhizobium johnstonii (strain DSM 114642 / LMG 32736 / 3841) (Rhizobium leguminosarum bv. viciae).